The following is a 212-amino-acid chain: Thaumatin-like protein 1b (212 aa).

Disulfide bonds link Cys47–Cys57, Cys62–Cys69, Cys117–Cys200, Cys122–Cys183, Cys130–Cys146, Cys150–Cys159, and Cys160–Cys170.

It belongs to the thaumatin family.

The protein resides in the secreted. The chain is Thaumatin-like protein 1b from Malus domestica (Apple).